We begin with the raw amino-acid sequence, 178 residues long: Translation initiation factor IF-3 (178 aa).

The tract at residues 1 to 20 (MRRPFRATPVQKDGPRSNRD) is disordered.

Belongs to the IF-3 family. As to quaternary structure, monomer.

The protein resides in the cytoplasm. IF-3 binds to the 30S ribosomal subunit and shifts the equilibrium between 70S ribosomes and their 50S and 30S subunits in favor of the free subunits, thus enhancing the availability of 30S subunits on which protein synthesis initiation begins. The chain is Translation initiation factor IF-3 from Brucella abortus biovar 1 (strain 9-941).